A 393-amino-acid chain; its full sequence is Riboflavin biosynthesis protein RibBA (393 aa).

Residues 1–200 (MQFDNIDSAL…IDDLIEYRKK (200 aa)) are DHBP synthase. D-ribulose 5-phosphate contacts are provided by residues 27–28 (RE), Asp-32, 139–143 (RNGHT), and Glu-163. Glu-28 serves as a coordination point for Mg(2+). His-142 contacts Mg(2+). The tract at residues 201–393 (LEPEIEFKAK…TKKIKMGHLI (193 aa)) is GTP cyclohydrolase II. 249–253 (RLHSA) lines the GTP pocket. Zn(2+) contacts are provided by Cys-254, Cys-265, and Cys-267. GTP is bound by residues Gln-270, 291-293 (EGR), and Thr-313. Asp-325 (proton acceptor; for GTP cyclohydrolase activity) is an active-site residue. Arg-327 serves as the catalytic Nucleophile; for GTP cyclohydrolase activity. GTP-binding residues include Ser-348 and Lys-353.

The protein in the N-terminal section; belongs to the DHBP synthase family. It in the C-terminal section; belongs to the GTP cyclohydrolase II family. Mg(2+) serves as cofactor. The cofactor is Mn(2+). Zn(2+) is required as a cofactor.

It catalyses the reaction D-ribulose 5-phosphate = (2S)-2-hydroxy-3-oxobutyl phosphate + formate + H(+). It carries out the reaction GTP + 4 H2O = 2,5-diamino-6-hydroxy-4-(5-phosphoribosylamino)-pyrimidine + formate + 2 phosphate + 3 H(+). It functions in the pathway cofactor biosynthesis; riboflavin biosynthesis; 2-hydroxy-3-oxobutyl phosphate from D-ribulose 5-phosphate: step 1/1. The protein operates within cofactor biosynthesis; riboflavin biosynthesis; 5-amino-6-(D-ribitylamino)uracil from GTP: step 1/4. In terms of biological role, catalyzes the conversion of D-ribulose 5-phosphate to formate and 3,4-dihydroxy-2-butanone 4-phosphate. Catalyzes the conversion of GTP to 2,5-diamino-6-ribosylamino-4(3H)-pyrimidinone 5'-phosphate (DARP), formate and pyrophosphate. This Staphylococcus aureus (strain Mu50 / ATCC 700699) protein is Riboflavin biosynthesis protein RibBA.